The primary structure comprises 123 residues: Large ribosomal subunit protein uL18 (123 aa).

Belongs to the universal ribosomal protein uL18 family. As to quaternary structure, part of the 50S ribosomal subunit; part of the 5S rRNA/L5/L18/L25 subcomplex. Contacts the 5S and 23S rRNAs.

This is one of the proteins that bind and probably mediate the attachment of the 5S RNA into the large ribosomal subunit, where it forms part of the central protuberance. The protein is Large ribosomal subunit protein uL18 of Chlamydia trachomatis serovar L2 (strain ATCC VR-902B / DSM 19102 / 434/Bu).